The following is a 426-amino-acid chain: Protein sum2 (426 aa).

The Sm domain occupies 1-80 (MTEFIGSRIS…VKDLRIEEPA (80 aa)). Disordered regions lie at residues 79-100 (PATTPSAPPVQPPNDPAIIGSN), 204-305 (GMPS…AKPR), and 348-426 (SCES…ANDQ). Residues 84–93 (SAPPVQPPND) show a composition bias toward pro residues. Polar residues predominate over residues 226–237 (VSASPSLQSMPP). The span at 261-278 (RNSTVTNDRVVNTTVDVS) shows a compositional bias: low complexity. Polar residues predominate over residues 279–298 (QSQTVETSGPSKEVPTTQPD). Positions 296 to 332 (QPDASAAKPRTEFDFQTANQKFQSMKDDLLKGKNDEE) constitute a DFDF domain. An FFD box motif is present at residues 335-351 (EFYKPKQSFFDNISCES). The segment covering 350 to 371 (ESKEKGMEAADRRALRDRERSL) has biased composition (basic and acidic residues). The TFG box signature appears at 360 to 380 (DRRALRDRERSLNMETFGVAG). Over residues 384–401 (RGRRGRGRGRGGRGRGRG) the composition is skewed to basic residues. Residues 405 to 426 (NQYNQYRNSNGSQPRAQPANDQ) are compositionally biased toward polar residues.

In terms of biological role, required for G2/M phase checkpoint control. The polypeptide is Protein sum2 (sum2) (Schizosaccharomyces pombe (strain 972 / ATCC 24843) (Fission yeast)).